The following is a 1871-amino-acid chain: Protein RRP5 homolog (1871 aa).

The interval 1–62 is disordered; the sequence is MANLEESFPR…KTKKLKIEKR (62 aa). An N-acetylalanine modification is found at A2. S7 is modified (phosphoserine). A compositionally biased stretch (basic residues) spans 43 to 59; the sequence is KRKKSQKGPAKTKKLKI. 4 S1 motif domains span residues 83–171, 187–258, 281–346, and 365–436; these read GMRI…LSLN, GMLL…LSVG, GLVV…LSLR, and GAVL…LSLR. Position 438 is a phosphoserine (S438). S1 motif domains are found at residues 453–522, 542–611, 636–707, and 729–798; these read GAVV…MTLK, GLQT…LSFK, GQLV…LCRK, and GMLL…LSLR. The interval 998–1018 is disordered; the sequence is AAKRTMRPTQKDSETVDEDEE. K1030 is covalently cross-linked (Glycyl lysine isopeptide (Lys-Gly) (interchain with G-Cter in SUMO1)). 4 S1 motif domains span residues 1036–1109, 1149–1222, 1230–1298, and 1324–1396; these read GDMV…ISHP, GQTV…LSLT, GEVA…LSLR, and GQLL…LSFL. S1360 and S1362 each carry phosphoserine. Disordered stretches follow at residues 1395-1531 and 1549-1586; these read FLPG…APRL and ALPP…KAEK. K1416 participates in a covalent cross-link: Glycyl lysine isopeptide (Lys-Gly) (interchain with G-Cter in SUMO2). 2 stretches are compositionally biased toward basic and acidic residues: residues 1416-1459 and 1469-1484; these read KQEE…EKQQ and GGRE…ERVS. Residues S1476, S1493, and S1498 each carry the phosphoserine modification. A compositionally biased stretch (basic and acidic residues) spans 1575 to 1586; it reads KERELEKQKAEK. HAT repeat units follow at residues 1599-1631, 1705-1737, 1775-1807, and 1809-1844; these read GRQP…FHLQ, EKFQ…FLLR, GDAE…MTIK, and GSQK…YEKQ.

In terms of assembly, interacts with NF-kappa-B p50/NFKB1 and NF-kappa-B p65/RELA.

It localises to the nucleus. It is found in the nucleolus. In terms of biological role, essential for the generation of mature 18S rRNA, specifically necessary for cleavages at sites A0, 1 and 2 of the 47S precursor. Directly interacts with U3 snoRNA. Its function is as follows. Involved in the biogenesis of rRNA. This is Protein RRP5 homolog (PDCD11) from Homo sapiens (Human).